The following is a 100-amino-acid chain: Urease subunit gamma (100 aa).

This sequence belongs to the urease gamma subunit family. As to quaternary structure, heterotrimer of UreA (gamma), UreB (beta) and UreC (alpha) subunits. Three heterotrimers associate to form the active enzyme.

It localises to the cytoplasm. The catalysed reaction is urea + 2 H2O + H(+) = hydrogencarbonate + 2 NH4(+). It participates in nitrogen metabolism; urea degradation; CO(2) and NH(3) from urea (urease route): step 1/1. This Parasynechococcus marenigrum (strain WH8102) protein is Urease subunit gamma.